The primary structure comprises 307 residues: NAD kinase (307 aa).

D78 (proton acceptor) is an active-site residue. Residues 78–79, H83, 154–155, R165, R182, D184, and Q255 contribute to the NAD(+) site; these read DG and NE.

It belongs to the NAD kinase family. It depends on a divalent metal cation as a cofactor.

It localises to the cytoplasm. It catalyses the reaction NAD(+) + ATP = ADP + NADP(+) + H(+). In terms of biological role, involved in the regulation of the intracellular balance of NAD and NADP, and is a key enzyme in the biosynthesis of NADP. Catalyzes specifically the phosphorylation on 2'-hydroxyl of the adenosine moiety of NAD to yield NADP. This is NAD kinase from Halorhodospira halophila (strain DSM 244 / SL1) (Ectothiorhodospira halophila (strain DSM 244 / SL1)).